Here is a 152-residue protein sequence, read N- to C-terminus: UPF0735 ACT domain-containing protein SAS1579 (152 aa).

Residues 75-150 enclose the ACT domain; it reads TLILYVTDIV…YVSKVELISM (76 aa).

Belongs to the UPF0735 family.

This chain is UPF0735 ACT domain-containing protein SAS1579, found in Staphylococcus aureus (strain MSSA476).